A 193-amino-acid chain; its full sequence is Flagellar transcriptional regulator FlhC (193 aa).

Zn(2+) contacts are provided by cysteine 138, cysteine 141, cysteine 158, and cysteine 161.

Belongs to the FlhC family. In terms of assembly, heterohexamer composed of two FlhC and four FlhD subunits. Each FlhC binds a FlhD dimer, forming a heterotrimer, and a hexamer assembles by dimerization of two heterotrimers. The cofactor is Zn(2+).

It is found in the cytoplasm. Functionally, functions in complex with FlhD as a master transcriptional regulator that regulates transcription of several flagellar and non-flagellar operons by binding to their promoter region. Activates expression of class 2 flagellar genes, including fliA, which is a flagellum-specific sigma factor that turns on the class 3 genes. Also regulates genes whose products function in a variety of physiological pathways. This Yersinia enterocolitica protein is Flagellar transcriptional regulator FlhC.